The primary structure comprises 1764 residues: Nucleolar pre-ribosomal-associated protein 1 (1764 aa).

Residues 1–23 (MSNHSEAYGSRDQRREKYTQGKE) are disordered. The span at 9-23 (GSRDQRREKYTQGKE) shows a compositional bias: basic and acidic residues.

In terms of assembly, associates with pre-60S ribosomal particles. Predominantly associated with the 27SA2 pre-rRNA. Can associate with a subset of box H/ACA and box C/D small nucleolar RNPs (snoRNPs) required for peptidyl transferase center modification and with small RNAs snR37 and snR42. Interacts with URB2. Together with DBP6, NOP8, URB2 and RSA3, forms an RNA-independent complex, which is required during early maturation of nascent 60S ribosomal subunits.

It is found in the nucleus. The protein resides in the nucleolus. Functionally, required for 60S ribosomal subunit formation and pre-rRNA processing. Required for normal accumulation of 25S and 5.8S rRNAs. This chain is Nucleolar pre-ribosomal-associated protein 1 (URB1), found in Saccharomyces cerevisiae (strain ATCC 204508 / S288c) (Baker's yeast).